The following is an 84-amino-acid chain: Small ribosomal subunit protein uS17 (84 aa).

It belongs to the universal ribosomal protein uS17 family. In terms of assembly, part of the 30S ribosomal subunit.

Its function is as follows. One of the primary rRNA binding proteins, it binds specifically to the 5'-end of 16S ribosomal RNA. This is Small ribosomal subunit protein uS17 from Clostridium botulinum (strain ATCC 19397 / Type A).